Reading from the N-terminus, the 954-residue chain is DNA repair and telomere maintenance protein NBS1 (954 aa).

One can recognise an FHA domain in the interval Tyr22–Ile85. 2 consecutive BRCT domains span residues Thr107–Val186 and Gly244–Ile349. Residues Val368 to Gln377 are compositionally biased toward polar residues. Disordered regions lie at residues Val368–Phe431, Gln444–Glu506, Ile528–Asp580, Val630–Arg654, and Gly692–Arg954. Residues Ser378–Glu393 show a composition bias toward basic and acidic residues. Residues Pro416 to Phe428 show a composition bias toward basic residues. Residues Pro458 to Glu471 show a composition bias toward polar residues. The segment covering Pro541–Glu554 has biased composition (acidic residues). Composition is skewed to basic and acidic residues over residues Arg640–Arg654 and Gly704–Thr715. Residues Asp726 to Gly737 are compositionally biased toward low complexity. Residues Lys738–Gly751 are compositionally biased toward basic and acidic residues. Low complexity-rich tracts occupy residues Glu801 to Pro815 and Arg826 to Gln842. Residues Gly936–Glu945 show a composition bias toward acidic residues.

Belongs to the Nibrin family. As to quaternary structure, component of the MRN complex composed of two heterodimers RAD50 and MRE11 associated with a single NBS1.

It is found in the nucleus. Its subcellular location is the chromosome. Component of the MRN complex, which plays a central role in double-strand break (DSB) repair, DNA recombination, maintenance of telomere integrity and meiosis. The MRN complex is involved in the repair of DNA double-strand breaks (DSBs) via homologous recombination (HR), an error-free mechanism which primarily occurs during S and G2 phases. The complex (1) mediates the end resection of damaged DNA, which generates proper single-stranded DNA, a key initial steps in HR, and is (2) required for the recruitment of other repair factors and efficient activation of ATM and ATR upon DNA damage. The MRN complex possesses single-strand endonuclease activity and double-strand-specific 3'-5' exonuclease activity, which are provided by MRE11, to initiate end resection, which is required for single-strand invasion and recombination. Within the MRN complex, NBS1 acts as a protein-protein adapter, which specifically recognizes and binds phosphorylated proteins, promoting their recruitment to DNA damage sites. Recruits MRE11 and RAD50 components of the MRN complex to DSBs in response to DNA damage. This chain is DNA repair and telomere maintenance protein NBS1, found in Chaetomium thermophilum (strain DSM 1495 / CBS 144.50 / IMI 039719) (Thermochaetoides thermophila).